Reading from the N-terminus, the 491-residue chain is Chromosomal replication initiator protein DnaA (491 aa).

The tract at residues 1 to 69 (MTTWDKCLKK…TIQECHGNDL (69 aa)) is domain I, interacts with DnaA modulators. A domain II region spans residues 69 to 154 (LIIEYSNKKF…KEDEEYSFGL (86 aa)). The tract at residues 155–371 (PLKEKYVFDS…GALNRVLTTS (217 aa)) is domain III, AAA+ region. ATP is bound by residues Gly-199, Gly-201, Lys-202, and Thr-203. Positions 372–491 (KFNHKDPTIE…YELLLNKISR (120 aa)) are domain IV, binds dsDNA.

This sequence belongs to the DnaA family. In terms of assembly, oligomerizes as a right-handed, spiral filament on DNA at oriC.

It is found in the cytoplasm. Its function is as follows. Plays an essential role in the initiation and regulation of chromosomal replication. ATP-DnaA binds to the origin of replication (oriC) to initiate formation of the DNA replication initiation complex once per cell cycle. Binds the DnaA box (a 9 base pair repeat at the origin) and separates the double-stranded (ds)DNA. Forms a right-handed helical filament on oriC DNA; dsDNA binds to the exterior of the filament while single-stranded (ss)DNA is stabiized in the filament's interior. The ATP-DnaA-oriC complex binds and stabilizes one strand of the AT-rich DNA unwinding element (DUE), permitting loading of DNA polymerase. After initiation quickly degrades to an ADP-DnaA complex that is not apt for DNA replication. Binds acidic phospholipids. This Francisella tularensis subsp. tularensis (strain WY96-3418) protein is Chromosomal replication initiator protein DnaA.